The following is a 465-amino-acid chain: D(1C) dopamine receptor (465 aa).

Over 1-30 (MENFSIFNVTVNVWHADLDVGNSDLSLRAL) the chain is Extracellular. N-linked (GlcNAc...) asparagine glycosylation is found at Asn3 and Asn8. The chain crosses the membrane as a helical span at residues 31 to 54 (TGLLLSLLILSTLLGNTLVCLAVI). Residues 55 to 65 (KFRHLRSKVTN) are Cytoplasmic-facing. A helical membrane pass occupies residues 66 to 92 (FFVISLAVSDLFVALLVMPWKAVTEVA). At 93–101 (GFWVFGDFC) the chain is on the extracellular side. A disulfide bridge links Cys101 with Cys187. A helical membrane pass occupies residues 102 to 124 (DTWVAFDIMCSTASILNLCIISL). Over 125 to 143 (DRYWAIASPFRYERKMTQR) the chain is Cytoplasmic. The helical transmembrane segment at 144-168 (VAFIMIGVAWTLSILISFIPVQLSW) threads the bilayer. Over 169–193 (HKSHEADEELNGVNHTENCDSSLNR) the chain is Extracellular. Residues 194–219 (TYAISSSLISFYIPVVIMIGTYTRIY) form a helical membrane-spanning segment. The Cytoplasmic portion of the chain corresponds to 220–264 (RIAQTQIRRISSLERAVEHAQRCSSRLSNENSLKTSFRKETKVLK). A helical membrane pass occupies residues 265–291 (TLSIIMGVFVFCWLPFFVLNCMIPFCH). Residues 292–309 (MNLPGQNEPEPPCVSETT) are Extracellular-facing. A helical transmembrane segment spans residues 310-334 (FNIFVWFGWANSSLNPVIYAFNADF). The Cytoplasmic segment spans residues 335–465 (RKAFTTILGC…EDRHYTTKLY (131 aa)). The S-palmitoyl cysteine moiety is linked to residue Cys344.

It belongs to the G-protein coupled receptor 1 family. Brain and kidney.

It is found in the cell membrane. The protein localises to the cell projection. Its subcellular location is the cilium membrane. In terms of biological role, this is one of the five types (D1 to D5) of receptors for dopamine. The activity of this receptor is mediated by G proteins which activate adenylyl cyclase. This is D(1C) dopamine receptor (drd1c) from Xenopus laevis (African clawed frog).